Consider the following 304-residue polypeptide: Secreted mono- and diacylglycerol lipase LIP1 (304 aa).

The first 19 residues, 1–19 (MLFSRFVLLAFGSVAAVSA), serve as a signal peptide directing secretion. Thr-32 carries O-linked (Man...) threonine glycosylation. A disulfide bridge links Cys-57 with Cys-297. Ser-171 acts as the Nucleophile in catalysis. Asp-228 is an active-site residue. Asn-253 carries N-linked (GlcNAc...) asparagine glycosylation. His-281 is an active-site residue.

It belongs to the AB hydrolase superfamily. Lipase family. Class 3 subfamily.

It is found in the secreted. The protein resides in the cell wall. It catalyses the reaction a monoacylglycerol + H2O = glycerol + a fatty acid + H(+). The enzyme catalyses a diacylglycerol + H2O = a monoacylglycerol + a fatty acid + H(+). Its activity is regulated as follows. RHC 80267, a well-known inhibitor of diacylglycerol lipases from mammals, also acts as an inhibitor for LIP1/SMG1. Functionally, secreted lipase involved in Dandruff and seborrheic dermatitis (D/SD) probably via lipase-mediated breakdown of sebaceous lipids and release of irritating free fatty acids. Shows activity against monoglyceride and diglyceride substrates, but not triglyceride substrates and does not exhibit regio-selective production of diacylglycerols. Able to hydrolyze diacylglycerols such as distearin, dilinolein, dipalmitoylglycerol and dipalmitolein. Cleaves oleic acid from 1,2 isomers of diolein on both the 1 and the 2 position of the glycerol backbone, resulting mainly in free fatty acids but no monoolein is detected. Shows activity on monoolein and liberates mostly free fatty acids, but can also perform the reverse reaction and produce diolein. The chain is Secreted mono- and diacylglycerol lipase LIP1 from Malassezia globosa (strain ATCC MYA-4612 / CBS 7966) (Dandruff-associated fungus).